A 189-amino-acid polypeptide reads, in one-letter code: Ribosome maturation factor RimM (189 aa).

One can recognise a PRC barrel domain in the interval 96-169 (EDEFFQTDLI…TLLVEPYAAG (74 aa)). The interval 170 to 189 (LIADDEDERPQNEKKKPKKS) is disordered.

The protein belongs to the RimM family. As to quaternary structure, binds ribosomal protein uS19.

The protein resides in the cytoplasm. In terms of biological role, an accessory protein needed during the final step in the assembly of 30S ribosomal subunit, possibly for assembly of the head region. Essential for efficient processing of 16S rRNA. May be needed both before and after RbfA during the maturation of 16S rRNA. It has affinity for free ribosomal 30S subunits but not for 70S ribosomes. This Brucella anthropi (strain ATCC 49188 / DSM 6882 / CCUG 24695 / JCM 21032 / LMG 3331 / NBRC 15819 / NCTC 12168 / Alc 37) (Ochrobactrum anthropi) protein is Ribosome maturation factor RimM.